The chain runs to 70 residues: DNA gyrase inhibitor YacG (70 aa).

Residues C9, C12, C28, and C32 each contribute to the Zn(2+) site. The segment at 44-70 is disordered; the sequence is SRKIPGSSIDPESIVTTNNKQDNVDEQ.

It belongs to the DNA gyrase inhibitor YacG family. As to quaternary structure, interacts with GyrB. The cofactor is Zn(2+).

Functionally, inhibits all the catalytic activities of DNA gyrase by preventing its interaction with DNA. Acts by binding directly to the C-terminal domain of GyrB, which probably disrupts DNA binding by the gyrase. This is DNA gyrase inhibitor YacG from Legionella pneumophila subsp. pneumophila (strain Philadelphia 1 / ATCC 33152 / DSM 7513).